Here is a 105-residue protein sequence, read N- to C-terminus: Pyrimidine/purine nucleoside phosphorylase (105 aa).

The protein belongs to the nucleoside phosphorylase PpnP family.

It carries out the reaction a purine D-ribonucleoside + phosphate = a purine nucleobase + alpha-D-ribose 1-phosphate. The enzyme catalyses adenosine + phosphate = alpha-D-ribose 1-phosphate + adenine. It catalyses the reaction cytidine + phosphate = cytosine + alpha-D-ribose 1-phosphate. The catalysed reaction is guanosine + phosphate = alpha-D-ribose 1-phosphate + guanine. It carries out the reaction inosine + phosphate = alpha-D-ribose 1-phosphate + hypoxanthine. The enzyme catalyses thymidine + phosphate = 2-deoxy-alpha-D-ribose 1-phosphate + thymine. It catalyses the reaction uridine + phosphate = alpha-D-ribose 1-phosphate + uracil. The catalysed reaction is xanthosine + phosphate = alpha-D-ribose 1-phosphate + xanthine. Catalyzes the phosphorolysis of diverse nucleosides, yielding D-ribose 1-phosphate and the respective free bases. Can use uridine, adenosine, guanosine, cytidine, thymidine, inosine and xanthosine as substrates. Also catalyzes the reverse reactions. This Ralstonia nicotianae (strain ATCC BAA-1114 / GMI1000) (Ralstonia solanacearum) protein is Pyrimidine/purine nucleoside phosphorylase.